A 177-amino-acid chain; its full sequence is MSRTKSTTICIVRRDGKTVIAGDGQVTLGNSVMKASARKIRKLYEGKIVVGFAGSAADGLALMERLEEKLNKYRGNLLRAAVELAKDWRTDKFLRRLEAVMVAADKEIMLLISGNGDVIEPDEPVLAIGSGGDYARSAALALYRNTDLSARQIVEEAMKIAGEICIYTNSNITIEEL.

The active site involves Thr-7. The Na(+) site is built by Gly-162, Cys-165, and Thr-168.

This sequence belongs to the peptidase T1B family. HslV subfamily. As to quaternary structure, a double ring-shaped homohexamer of HslV is capped on each side by a ring-shaped HslU homohexamer. The assembly of the HslU/HslV complex is dependent on binding of ATP.

It localises to the cytoplasm. It catalyses the reaction ATP-dependent cleavage of peptide bonds with broad specificity.. With respect to regulation, allosterically activated by HslU binding. Protease subunit of a proteasome-like degradation complex believed to be a general protein degrading machinery. This is ATP-dependent protease subunit HslV from Persephonella marina (strain DSM 14350 / EX-H1).